We begin with the raw amino-acid sequence, 1669 residues long: Collagen alpha-1(IV) chain (1669 aa).

Residues 1–27 (MGPRLSVWLLLLFAALLLHEERSRAAA) form the signal peptide. Positions 28–172 (KGDCGGSGCG…LGHVPGTLLK (145 aa)) are cleaved as a propeptide — N-terminal propeptide (7S domain). Residues 47–1443 (QKGERGLPGL…MGPPGTPSVD (1397 aa)) form a disordered region. The span at 92–104 (TRGPPGAAGYPGN) shows a compositional bias: low complexity. Residue asparagine 126 is glycosylated (N-linked (GlcNAc...) asparagine). Positions 173-1440 (GERGFPGIPG…PGSMGPPGTP (1268 aa)) are triple-helical region. Residues 196–214 (VGPPGFTGPPGPPGPPGPP) show a composition bias toward pro residues. 3-hydroxyproline is present on residues proline 204, proline 207, and proline 210. A compositionally biased stretch (low complexity) spans 234-247 (QGVSGPPGVPGQAQ). The segment covering 289–298 (PGKDGEKGER) has biased composition (basic and acidic residues). Residues 367–376 (PGQPGPPGFP) are compositionally biased toward pro residues. Residues 377–387 (TPGQAGAPGFP) show a composition bias toward low complexity. 2 stretches are compositionally biased toward pro residues: residues 413–424 (PGPPGPPGPPGQ) and 436–448 (PGPPGDQGPPGTP). The span at 485–494 (PGEIGFPGQP) shows a compositional bias: low complexity. Composition is skewed to basic and acidic residues over residues 497-508 (KGDRGLPGRDGL) and 535-545 (FDMRLKGDKGD). Residues 586–595 (GPPGGVGFPG) are compositionally biased toward gly residues. A 3-hydroxyproline mark is found at proline 587 and proline 602. At proline 603 the chain carries 4-hydroxyproline. Proline 605 carries the post-translational modification 3-hydroxyproline. Proline 606 is subject to 4-hydroxyproline. Residues 611-620 (IGPVGEKGQA) show a composition bias toward low complexity. Gly residues predominate over residues 621–630 (GFPGGPGSPG). A 4-hydroxyproline mark is found at proline 623, proline 626, proline 629, and proline 632. Proline 647 carries the post-translational modification 3-hydroxyproline. The segment covering 715–731 (RPGFNGLPGNPGPQGQK) has biased composition (low complexity). Over residues 758–767 (GSIGGPGVPG) the composition is skewed to gly residues. Pro residues predominate over residues 784 to 802 (PGPPGVQGPAGPPGVPGIG). The segment covering 803–817 (PPGAMGPPGGQGPPG) has biased composition (gly residues). Composition is skewed to low complexity over residues 847 to 875 (SQGLPGLTGQSGLPGLPGQQGTPGVPGFP) and 994 to 1003 (DPGLSGTPGS). Positions 1011-1020 (GSVGGMGLPG) are enriched in gly residues. Proline 1214 is modified (3-hydroxyproline). The span at 1220-1230 (QPGLPGTPGHP) shows a compositional bias: low complexity. Pro residues predominate over residues 1247-1258 (PGHPGPMGPPGF). Gly residues predominate over residues 1290–1299 (GMPGIGGSPG). Composition is skewed to low complexity over residues 1333-1343 (DQGVPGPKGLQ), 1368-1391 (PGLKGLQGPPGPKGQQGVTGSVGL), and 1398-1412 (PGFDGAPGQKGETGP). Residues 1413-1428 (FGPPGPRGFPGPPGPD) show a composition bias toward pro residues. 3-hydroxyproline is present on proline 1424. Positions 1445–1669 (GFLVTRHSQT…SRCQVCMRRT (225 aa)) constitute a Collagen IV NC1 domain. Disulfide bonds link cysteine 1460-cysteine 1551, cysteine 1493-cysteine 1548, cysteine 1505-cysteine 1511, cysteine 1570-cysteine 1665, cysteine 1604-cysteine 1662, and cysteine 1616-cysteine 1622. Residue methionine 1533 forms an S-Lysyl-methionine sulfilimine (Met-Lys) (interchain with K-1651) linkage. Lysine 1651 participates in a covalent cross-link: S-Lysyl-methionine sulfilimine (Lys-Met) (interchain with M-1533).

This sequence belongs to the type IV collagen family. In terms of assembly, there are six type IV collagen isoforms, alpha 1(IV)-alpha 6(IV), each of which can form a triple helix structure with 2 other chains to generate type IV collagen network. Interacts with EFEMP2. In terms of processing, lysines at the third position of the tripeptide repeating unit (G-X-Y) are hydroxylated. The modified lysines can be O-glycosylated. Contains 4-hydroxyproline. Prolines at the third position of the tripeptide repeating unit (G-X-Y) are hydroxylated in some or all of the chains. Post-translationally, contains 3-hydroxyproline. This modification occurs on the first proline residue in the sequence motif Gly-Pro-Hyp, where Hyp is 4-hydroxyproline. In terms of processing, type IV collagens contain numerous cysteine residues which are involved in inter- and intramolecular disulfide bonding. 12 of these, located in the NC1 domain, are conserved in all known type IV collagens. The trimeric structure of the NC1 domains is stabilized by covalent bonds (sulfilimine cross-links) between Lys and Met residues. These cross-links are important for the mechanical stability of the basement membrane. Sulfilimine cross-link is catalyzed by PXDN. Post-translationally, proteolytic processing produces the C-terminal NC1 peptide, arresten. Detected in the basement membrane of the cornea (at protein level).

It localises to the secreted. Its subcellular location is the extracellular space. The protein resides in the extracellular matrix. It is found in the basement membrane. Type IV collagen is the major structural component of glomerular basement membranes (GBM), forming a 'chicken-wire' meshwork together with laminins, proteoglycans and entactin/nidogen. Its function is as follows. Arresten, comprising the C-terminal NC1 domain, inhibits angiogenesis and tumor formation. The C-terminal half is found to possess the anti-angiogenic activity. Specifically inhibits endothelial cell proliferation, migration and tube formation. This is Collagen alpha-1(IV) chain from Mus musculus (Mouse).